The sequence spans 301 residues: Probable 5-dehydro-4-deoxyglucarate dehydratase (301 aa).

The protein belongs to the DapA family.

The enzyme catalyses 5-dehydro-4-deoxy-D-glucarate + H(+) = 2,5-dioxopentanoate + CO2 + H2O. The protein operates within carbohydrate acid metabolism; D-glucarate degradation; 2,5-dioxopentanoate from D-glucarate: step 2/2. The polypeptide is Probable 5-dehydro-4-deoxyglucarate dehydratase (Cereibacter sphaeroides (strain ATCC 17023 / DSM 158 / JCM 6121 / CCUG 31486 / LMG 2827 / NBRC 12203 / NCIMB 8253 / ATH 2.4.1.) (Rhodobacter sphaeroides)).